A 199-amino-acid chain; its full sequence is Recombination protein RecR (199 aa).

The C4-type zinc finger occupies 57–72; it reads CRQCRTLTEDELCPQC. The Toprim domain maps to 80 to 174; sequence SLLCVVQSPV…TISRIAHGVP (95 aa).

Belongs to the RecR family.

Its function is as follows. May play a role in DNA repair. It seems to be involved in an RecBC-independent recombinational process of DNA repair. It may act with RecF and RecO. This is Recombination protein RecR from Stutzerimonas stutzeri (strain A1501) (Pseudomonas stutzeri).